Consider the following 426-residue polypeptide: MLYPRALLPAAVALASLVLAVPLEERQLAFDFNNQKVRGVNLGGWFVLEPWITPSIFQQWANGGDVIDEYSYTAALGKDEAFTRLNNHWATWITEEDFAEIASMGLNHVRIPIGYWALVAIPNDPYVQGQLSYVDRAIDWARKNGLKVMLDLHGAPGSQNGFDNSGRTGTIAWQSGDNVPNTLRAIQALAERYAPQTDVVTAIELLNEPANWGNDLSQIKKFYYDGWGNVRTQGQTAVTIHDAFLDPRSWNGFMNSEAGVNNVILDTHIYQVFSQNEVAMKPCAHVQTACSSIDKIKPTDKWTIVGEWTGAQTDCAKWLNGLGKGARYDGTLPGHSEGYYGSCDKKYEGTVDSMLPVDKTNLQYFVEAQLDAYESHTGWFFWTWKTESAPEWHFQNLTRAGLIPQPLDSRKVPSQCGTSQCLVPGN.

The first 20 residues, M1–A20, serve as a signal peptide directing secretion. E208 serves as the catalytic Proton donor. Intrachain disulfides connect C290/C416 and C315/C343. The active-site Nucleophile is E307.

Belongs to the glycosyl hydrolase 5 (cellulase A) family.

It localises to the secreted. It catalyses the reaction Successive hydrolysis of beta-D-glucose units from the non-reducing ends of (1-&gt;3)-beta-D-glucans, releasing alpha-glucose.. Beta-glucanases participate in the metabolism of beta-glucan, the main structural component of the cell wall. It could also function biosynthetically as a transglycosylase. This chain is Glucan 1,3-beta-glucosidase, found in Blumeria graminis (Powdery mildew).